The sequence spans 895 residues: Pentatricopeptide repeat-containing protein At1g74600, chloroplastic (895 aa).

The transit peptide at 1–71 (MNCLANESLN…CNLRTTKILQ (71 aa)) directs the protein to the chloroplast. 22 PPR repeats span residues 83–113 (DVFL…IPQP), 114–148 (DVVS…GFEA), 149–183 (NEIS…GYFF), 184–214 (YEVV…SLSA), 215–249 (NVYC…FQKP), 250–280 (DSYT…VIKC), 284–314 (DVFV…IPNP), 315–349 (SVVS…GVEI), 350–384 (NNCT…GFYL), 385–415 (DSSV…LDDI), 417–451 (RQNI…GLRT), 452–483 (DEFS…GLVL), 484–514 (DLTV…IPFK), 515–549 (DNAC…GTSP), 550–584 (DEST…GIDK), 585–615 (GMDL…LPEL), 616–650 (DPVS…GFTM), 651–685 (DSFA…GLCT), 686–716 (EPSV…INGP), 717–751 (DLIA…GFKP), 752–787 (DKVT…GIEP), and 788–818 (ENRH…MHIK). The interval 824–895 (WGTLLAACKI…VQKEPGWSSV (72 aa)) is type E motif; degenerate.

This sequence belongs to the PPR family. PCMP-E subfamily.

Its subcellular location is the plastid. The protein resides in the chloroplast. In Arabidopsis thaliana (Mouse-ear cress), this protein is Pentatricopeptide repeat-containing protein At1g74600, chloroplastic (PCMP-E69).